A 178-amino-acid polypeptide reads, in one-letter code: Cysteine-rich venom protein VAR3 (178 aa).

The first 22 residues, Met1–Ser22, serve as a signal peptide directing secretion. The SCP domain maps to Asn41–Tyr169. Disulfide bonds link Cys77/Cys156, Cys95/Cys170, and Cys151/Cys167.

This sequence belongs to the CRISP family. In terms of processing, contains 8 disulfide bonds. As to expression, expressed by the venom gland.

The protein localises to the secreted. Its function is as follows. Blocks ryanodine receptors, and potassium channels. The sequence is that of Cysteine-rich venom protein VAR3 from Varanus acanthurus (Ridge-tailed monitor).